The sequence spans 553 residues: CDP-diacylglycerol--glycerol-3-phosphate 3-phosphatidyltransferase, mitochondrial (553 aa).

The N-terminal 25 residues, 1-25, are a transit peptide targeting the mitochondrion; that stretch reads MAAPAAGPVFWRRLLGLLPGRPGLA. Residue S46 is modified to Phosphoserine. 121 to 128 contacts ATP; that stretch reads ASLYLGTG. PLD phosphodiesterase domains lie at 212-238 and 457-490; these read TIGL…SDSY and TGWT…GYRS. Catalysis depends on residues H217, K219, and D224.

Belongs to the CDP-alcohol phosphatidyltransferase class-II family.

It is found in the mitochondrion. The enzyme catalyses a CDP-1,2-diacyl-sn-glycerol + sn-glycerol 3-phosphate = a 1,2-diacyl-sn-glycero-3-phospho-(1'-sn-glycero-3'-phosphate) + CMP + H(+). Its pathway is phospholipid metabolism; phosphatidylglycerol biosynthesis; phosphatidylglycerol from CDP-diacylglycerol: step 1/2. Its activity is regulated as follows. Activated by calcium and magnesium and inhibited by other bivalent cations. Functionally, functions in the biosynthesis of the anionic phospholipids phosphatidylglycerol and cardiolipin. The chain is CDP-diacylglycerol--glycerol-3-phosphate 3-phosphatidyltransferase, mitochondrial (PGS1) from Cricetulus griseus (Chinese hamster).